A 224-amino-acid polypeptide reads, in one-letter code: UPF0173 metal-dependent hydrolase EF_1371 (224 aa).

It belongs to the UPF0173 family.

The protein is UPF0173 metal-dependent hydrolase EF_1371 of Enterococcus faecalis (strain ATCC 700802 / V583).